Here is a 499-residue protein sequence, read N- to C-terminus: uncharacterized protein (499 aa).

FAD-binding positions include Glu-6–Arg-35 and Tyr-272–Asp-282.

The protein belongs to the PheA/TfdB FAD monooxygenase family. FAD serves as cofactor.

This is an uncharacterized protein from Bacillus subtilis (strain 168).